The primary structure comprises 194 residues: Dephospho-CoA kinase (194 aa).

A DPCK domain is found at 3–194 (IVGLTGSIGM…RAIVDDLRAG (192 aa)). 11–16 (GMGKST) is an ATP binding site.

It belongs to the CoaE family.

The protein localises to the cytoplasm. It catalyses the reaction 3'-dephospho-CoA + ATP = ADP + CoA + H(+). It functions in the pathway cofactor biosynthesis; coenzyme A biosynthesis; CoA from (R)-pantothenate: step 5/5. Functionally, catalyzes the phosphorylation of the 3'-hydroxyl group of dephosphocoenzyme A to form coenzyme A. This chain is Dephospho-CoA kinase, found in Rhizobium meliloti (strain 1021) (Ensifer meliloti).